We begin with the raw amino-acid sequence, 332 residues long: tRNA-dihydrouridine synthase B (332 aa).

Residues 16–18 (PMA) and Gln70 contribute to the FMN site. The Proton donor role is filled by Cys100. FMN-binding positions include Lys139, 200 to 202 (NGD), and 224 to 225 (GR).

It belongs to the Dus family. DusB subfamily. It depends on FMN as a cofactor.

It catalyses the reaction a 5,6-dihydrouridine in tRNA + NAD(+) = a uridine in tRNA + NADH + H(+). The catalysed reaction is a 5,6-dihydrouridine in tRNA + NADP(+) = a uridine in tRNA + NADPH + H(+). In terms of biological role, catalyzes the synthesis of 5,6-dihydrouridine (D), a modified base found in the D-loop of most tRNAs, via the reduction of the C5-C6 double bond in target uridines. This Xanthomonas axonopodis pv. citri (strain 306) protein is tRNA-dihydrouridine synthase B.